The sequence spans 149 residues: Large ribosomal subunit protein uL22c (149 aa).

The protein belongs to the universal ribosomal protein uL22 family. In terms of assembly, part of the 50S ribosomal subunit.

The protein localises to the plastid. The protein resides in the chloroplast. Its function is as follows. This protein binds specifically to 23S rRNA. In terms of biological role, the globular domain of the protein is located near the polypeptide exit tunnel on the outside of the subunit, while an extended beta-hairpin is found that lines the wall of the exit tunnel in the center of the 70S ribosome. The chain is Large ribosomal subunit protein uL22c (rpl22-A) from Pelargonium hortorum (Common geranium).